Reading from the N-terminus, the 262-residue chain is Small ribosomal subunit protein eS4B (262 aa).

The region spanning 42–105 (LPLIVFLRNR…GEHFRLVYDI (64 aa)) is the S4 RNA-binding domain. Ser-223 is modified (phosphoserine).

The protein belongs to the eukaryotic ribosomal protein eS4 family. Component of the small ribosomal subunit (SSU). Mature yeast ribosomes consist of a small (40S) and a large (60S) subunit. The 40S small subunit contains 1 molecule of ribosomal RNA (18S rRNA) and at least 33 different proteins. The large 60S subunit contains 3 rRNA molecules (25S, 5.8S and 5S rRNA) and at least 46 different proteins.

It localises to the cytoplasm. The protein localises to the nucleus. The protein resides in the nucleolus. Component of the ribosome, a large ribonucleoprotein complex responsible for the synthesis of proteins in the cell. The small ribosomal subunit (SSU) binds messenger RNAs (mRNAs) and translates the encoded message by selecting cognate aminoacyl-transfer RNA (tRNA) molecules. The large subunit (LSU) contains the ribosomal catalytic site termed the peptidyl transferase center (PTC), which catalyzes the formation of peptide bonds, thereby polymerizing the amino acids delivered by tRNAs into a polypeptide chain. The nascent polypeptides leave the ribosome through a tunnel in the LSU and interact with protein factors that function in enzymatic processing, targeting, and the membrane insertion of nascent chains at the exit of the ribosomal tunnel. This Schizosaccharomyces pombe (strain 972 / ATCC 24843) (Fission yeast) protein is Small ribosomal subunit protein eS4B (rps402).